A 129-amino-acid chain; its full sequence is uncharacterized protein (129 aa).

A helical membrane pass occupies residues 33 to 50 (MGGNVMWFIALLFALLIA).

The protein resides in the membrane. This is an uncharacterized protein from Saccharomyces cerevisiae (strain ATCC 204508 / S288c) (Baker's yeast).